The sequence spans 281 residues: 4-diphosphocytidyl-2-C-methyl-D-erythritol kinase (281 aa).

The active site involves lysine 11. 95 to 105 (PVAAGLGGGSS) lines the ATP pocket. The active site involves aspartate 137.

The protein belongs to the GHMP kinase family. IspE subfamily.

It catalyses the reaction 4-CDP-2-C-methyl-D-erythritol + ATP = 4-CDP-2-C-methyl-D-erythritol 2-phosphate + ADP + H(+). It participates in isoprenoid biosynthesis; isopentenyl diphosphate biosynthesis via DXP pathway; isopentenyl diphosphate from 1-deoxy-D-xylulose 5-phosphate: step 3/6. Catalyzes the phosphorylation of the position 2 hydroxy group of 4-diphosphocytidyl-2C-methyl-D-erythritol. This chain is 4-diphosphocytidyl-2-C-methyl-D-erythritol kinase, found in Geobacter metallireducens (strain ATCC 53774 / DSM 7210 / GS-15).